The following is a 268-amino-acid chain: 4-hydroxy-tetrahydrodipicolinate reductase (268 aa).

NAD(+)-binding positions include G10–M15, D36, G99–T101, and A123–M126. Residue H156 is the Proton donor/acceptor of the active site. Residue H157 participates in (S)-2,3,4,5-tetrahydrodipicolinate binding. The active-site Proton donor is the K160. G166–T167 is a binding site for (S)-2,3,4,5-tetrahydrodipicolinate.

The protein belongs to the DapB family.

The protein resides in the cytoplasm. It carries out the reaction (S)-2,3,4,5-tetrahydrodipicolinate + NAD(+) + H2O = (2S,4S)-4-hydroxy-2,3,4,5-tetrahydrodipicolinate + NADH + H(+). It catalyses the reaction (S)-2,3,4,5-tetrahydrodipicolinate + NADP(+) + H2O = (2S,4S)-4-hydroxy-2,3,4,5-tetrahydrodipicolinate + NADPH + H(+). It functions in the pathway amino-acid biosynthesis; L-lysine biosynthesis via DAP pathway; (S)-tetrahydrodipicolinate from L-aspartate: step 4/4. Catalyzes the conversion of 4-hydroxy-tetrahydrodipicolinate (HTPA) to tetrahydrodipicolinate. The protein is 4-hydroxy-tetrahydrodipicolinate reductase of Janthinobacterium sp. (strain Marseille) (Minibacterium massiliensis).